The primary structure comprises 223 residues: Endonuclease V (223 aa).

2 residues coordinate Mg(2+): Asp35 and Asp103.

Belongs to the endonuclease V family. Requires Mg(2+) as cofactor.

The protein resides in the cytoplasm. It carries out the reaction Endonucleolytic cleavage at apurinic or apyrimidinic sites to products with a 5'-phosphate.. In terms of biological role, DNA repair enzyme involved in the repair of deaminated bases. Selectively cleaves double-stranded DNA at the second phosphodiester bond 3' to a deoxyinosine leaving behind the intact lesion on the nicked DNA. This Salmonella schwarzengrund (strain CVM19633) protein is Endonuclease V.